A 331-amino-acid chain; its full sequence is Phosphate acyltransferase (331 aa).

It belongs to the PlsX family. As to quaternary structure, homodimer. Probably interacts with PlsY.

It localises to the cytoplasm. The enzyme catalyses a fatty acyl-[ACP] + phosphate = an acyl phosphate + holo-[ACP]. It participates in lipid metabolism; phospholipid metabolism. Functionally, catalyzes the reversible formation of acyl-phosphate (acyl-PO(4)) from acyl-[acyl-carrier-protein] (acyl-ACP). This enzyme utilizes acyl-ACP as fatty acyl donor, but not acyl-CoA. The chain is Phosphate acyltransferase from Wolinella succinogenes (strain ATCC 29543 / DSM 1740 / CCUG 13145 / JCM 31913 / LMG 7466 / NCTC 11488 / FDC 602W) (Vibrio succinogenes).